The primary structure comprises 230 residues: MKITWLGHSGFRIEIEEAVLLVDPWLSGNPMFPIERRDEAIAGATHILLTHGHGDHSGDAVAIASELGLPIVGIYDLVTWLQSRDGVDGIGFNKGGTVTLDGARVTMVHATHSSSIMGEAGPVYTGTESGYMIAGEGHVIYASGDTDIMADMGWMGEYHRPDIGILAAGGHFTMDMKRAAFAARKYFDFRTVIPCHYRTFPLLEQSAEALRQGLPGVEVLEPEVLEPITI.

It belongs to the UPF0173 family.

The polypeptide is UPF0173 metal-dependent hydrolase Rsph17025_2229 (Cereibacter sphaeroides (strain ATCC 17025 / ATH 2.4.3) (Rhodobacter sphaeroides)).